The sequence spans 96 residues: Small ribosomal subunit protein bS6 (96 aa).

Belongs to the bacterial ribosomal protein bS6 family.

In terms of biological role, binds together with bS18 to 16S ribosomal RNA. The polypeptide is Small ribosomal subunit protein bS6 (Mycolicibacterium paratuberculosis (strain ATCC BAA-968 / K-10) (Mycobacterium paratuberculosis)).